We begin with the raw amino-acid sequence, 110 residues long: Late cornified envelope protein 2C (110 aa).

The segment covering methionine 1–cysteine 10 has biased composition (low complexity). The segment at methionine 1–lysine 23 is disordered. Residues glutamine 11–lysine 23 show a composition bias toward pro residues.

The protein belongs to the LCE family. In terms of assembly, interacts with CYSRT1; the interaction is direct. In terms of tissue distribution, skin-specific. Expression was readily detected in adult trunk skin, adult arm skin, fetal skin, penal skin, vulva, esophagus and tongue. Not expressed in the cervix, rectum, lung, colon, or placenta.

Precursors of the cornified envelope of the stratum. In Homo sapiens (Human), this protein is Late cornified envelope protein 2C (LCE2C).